A 59-amino-acid polypeptide reads, in one-letter code: Large ribosomal subunit protein uL30 (59 aa).

The protein belongs to the universal ribosomal protein uL30 family. Part of the 50S ribosomal subunit.

This is Large ribosomal subunit protein uL30 from Leptospira interrogans serogroup Icterohaemorrhagiae serovar copenhageni (strain Fiocruz L1-130).